Consider the following 386-residue polypeptide: Galactokinase (386 aa).

Residue 35 to 38 coordinates substrate; sequence EHTD. 125–131 is a binding site for ATP; it reads GAGLSSS. Residues serine 131 and glutamate 163 each coordinate Mg(2+). Aspartate 175 acts as the Proton acceptor in catalysis. Position 224 (tyrosine 224) interacts with substrate.

The protein belongs to the GHMP kinase family. GalK subfamily.

The protein resides in the cytoplasm. The enzyme catalyses alpha-D-galactose + ATP = alpha-D-galactose 1-phosphate + ADP + H(+). It functions in the pathway carbohydrate metabolism; galactose metabolism. Catalyzes the transfer of the gamma-phosphate of ATP to D-galactose to form alpha-D-galactose-1-phosphate (Gal-1-P). This is Galactokinase from Vibrio cholerae serotype O1 (strain ATCC 39315 / El Tor Inaba N16961).